The following is a 347-amino-acid chain: S-adenosylmethionine:tRNA ribosyltransferase-isomerase (347 aa).

The protein belongs to the QueA family. Monomer.

Its subcellular location is the cytoplasm. The catalysed reaction is 7-aminomethyl-7-carbaguanosine(34) in tRNA + S-adenosyl-L-methionine = epoxyqueuosine(34) in tRNA + adenine + L-methionine + 2 H(+). It functions in the pathway tRNA modification; tRNA-queuosine biosynthesis. Functionally, transfers and isomerizes the ribose moiety from AdoMet to the 7-aminomethyl group of 7-deazaguanine (preQ1-tRNA) to give epoxyqueuosine (oQ-tRNA). The chain is S-adenosylmethionine:tRNA ribosyltransferase-isomerase from Bordetella pertussis (strain Tohama I / ATCC BAA-589 / NCTC 13251).